The following is a 165-amino-acid chain: Pyruvoyl-dependent arginine decarboxylase 1 (165 aa).

Position 45 is a pyruvic acid (Ser) (serine 45).

The protein belongs to the PdaD family. The cofactor is pyruvate.

It catalyses the reaction L-arginine + H(+) = agmatine + CO2. In Methanosarcina acetivorans (strain ATCC 35395 / DSM 2834 / JCM 12185 / C2A), this protein is Pyruvoyl-dependent arginine decarboxylase 1 (pdaD1).